We begin with the raw amino-acid sequence, 408 residues long: 3-phosphoshikimate 1-carboxyvinyltransferase (408 aa).

Positions 20, 21, and 25 each coordinate 3-phosphoshikimate. Residue Lys20 coordinates phosphoenolpyruvate. Residue Arg111 coordinates phosphoenolpyruvate. 3-phosphoshikimate contacts are provided by Ser151, Ser152, Gln153, Ser178, Asp293, and Lys320. Residue Gln153 coordinates phosphoenolpyruvate. The active-site Proton acceptor is the Asp293. Phosphoenolpyruvate is bound by residues Arg324, Arg365, and Lys389.

This sequence belongs to the EPSP synthase family. In terms of assembly, monomer.

The protein localises to the cytoplasm. It catalyses the reaction 3-phosphoshikimate + phosphoenolpyruvate = 5-O-(1-carboxyvinyl)-3-phosphoshikimate + phosphate. It functions in the pathway metabolic intermediate biosynthesis; chorismate biosynthesis. Its function is as follows. Catalyzes the transfer of the enolpyruvyl moiety of phosphoenolpyruvate (PEP) to the 5-hydroxyl of shikimate-3-phosphate (S3P) to produce enolpyruvyl shikimate-3-phosphate and inorganic phosphate. The chain is 3-phosphoshikimate 1-carboxyvinyltransferase from Sulfurisphaera tokodaii (strain DSM 16993 / JCM 10545 / NBRC 100140 / 7) (Sulfolobus tokodaii).